A 495-amino-acid polypeptide reads, in one-letter code: Cytochrome P450 monooxygenase 64 (495 aa).

The chain crosses the membrane as a helical span at residues 2-22 (FLQIVTSVLATGLLYALISVL). N-linked (GlcNAc...) asparagine glycans are attached at residues Asn25 and Asn198. Position 428 (Cys428) interacts with heme.

Belongs to the cytochrome P450 family. Requires heme as cofactor.

It localises to the membrane. Its pathway is secondary metabolite biosynthesis. Functionally, cytochrome P450 monooxygenase that is able to use 4-ethoxybenzoic acid as a substrate for oxidation. The protein is Cytochrome P450 monooxygenase 64 of Postia placenta (strain ATCC 44394 / Madison 698-R) (Brown rot fungus).